Here is a 416-residue protein sequence, read N- to C-terminus: Probable endo-beta-1,4-glucanase celB (416 aa).

Residues 1–17 (MIWTLAPFVALLPLVTA) form the signal peptide. N-linked (GlcNAc...) asparagine glycans are attached at residues Asn-45, Asn-104, Asn-117, and Asn-135. The Nucleophile role is filled by Glu-214. The Proton donor role is filled by Glu-219. N-linked (GlcNAc...) asparagine glycosylation is found at Asn-233, Asn-278, Asn-292, and Asn-382.

This sequence belongs to the glycosyl hydrolase 7 (cellulase C) family.

It is found in the secreted. It carries out the reaction Endohydrolysis of (1-&gt;4)-beta-D-glucosidic linkages in cellulose, lichenin and cereal beta-D-glucans.. Functionally, has endoglucanase activity on substrates containing beta-1,4 glycosidic bonds, like in carboxymethylcellulose (CMC), hydroxyethylcellulose (HEC) and beta-glucan. Involved in the degradation of complex natural cellulosic substrates. This chain is Probable endo-beta-1,4-glucanase celB (celB), found in Aspergillus flavus (strain ATCC 200026 / FGSC A1120 / IAM 13836 / NRRL 3357 / JCM 12722 / SRRC 167).